The sequence spans 188 residues: Elongation factor P (188 aa).

This sequence belongs to the elongation factor P family.

It localises to the cytoplasm. Its pathway is protein biosynthesis; polypeptide chain elongation. In terms of biological role, involved in peptide bond synthesis. Stimulates efficient translation and peptide-bond synthesis on native or reconstituted 70S ribosomes in vitro. Probably functions indirectly by altering the affinity of the ribosome for aminoacyl-tRNA, thus increasing their reactivity as acceptors for peptidyl transferase. This is Elongation factor P from Methylorubrum extorquens (strain CM4 / NCIMB 13688) (Methylobacterium extorquens).